A 350-amino-acid chain; its full sequence is Peptide-N(4)-(N-acetyl-beta-glucosaminyl)asparagine amidase (350 aa).

Zn(2+) is bound by residues cysteine 123, cysteine 126, cysteine 157, and cysteine 160. Cysteine 183 (nucleophile) is an active-site residue. Residues histidine 210 and aspartate 227 contribute to the active site. Glutamate 230 is a binding site for substrate. The interval 324–350 (EIPPAAGAAGRQSGSADWKRQRGEDGR) is disordered. A compositionally biased stretch (basic and acidic residues) spans 340 to 350 (DWKRQRGEDGR).

This sequence belongs to the transglutaminase-like superfamily. PNGase family. The cofactor is Zn(2+).

It is found in the cytoplasm. The catalysed reaction is Hydrolysis of an N(4)-(acetyl-beta-D-glucosaminyl)asparagine residue in which the glucosamine residue may be further glycosylated, to yield a (substituted) N-acetyl-beta-D-glucosaminylamine and a peptide containing an aspartate residue.. Its function is as follows. Specifically deglycosylates the denatured form of N-linked glycoproteins in the cytoplasm and assists their proteasome-mediated degradation. Cleaves the beta-aspartyl-glucosamine (GlcNAc) of the glycan and the amide side chain of Asn, converting Asn to Asp. Prefers proteins containing high-mannose over those bearing complex type oligosaccharides. Can recognize misfolded proteins in the endoplasmic reticulum that are exported to the cytosol to be destroyed and deglycosylate them, while it has no activity toward native proteins. Deglycosylation is a prerequisite for subsequent proteasome-mediated degradation of some, but not all, misfolded glycoproteins. The chain is Peptide-N(4)-(N-acetyl-beta-glucosaminyl)asparagine amidase (PNG1) from Eremothecium gossypii (strain ATCC 10895 / CBS 109.51 / FGSC 9923 / NRRL Y-1056) (Yeast).